The following is a 354-amino-acid chain: Uroporphyrinogen decarboxylase (354 aa).

Substrate is bound by residues 27-31 (RQAGR), D77, Y153, T208, and H326.

Belongs to the uroporphyrinogen decarboxylase family. Homodimer.

Its subcellular location is the cytoplasm. The catalysed reaction is uroporphyrinogen III + 4 H(+) = coproporphyrinogen III + 4 CO2. It participates in porphyrin-containing compound metabolism; protoporphyrin-IX biosynthesis; coproporphyrinogen-III from 5-aminolevulinate: step 4/4. Functionally, catalyzes the decarboxylation of four acetate groups of uroporphyrinogen-III to yield coproporphyrinogen-III. The chain is Uroporphyrinogen decarboxylase from Neisseria meningitidis serogroup C / serotype 2a (strain ATCC 700532 / DSM 15464 / FAM18).